The following is a 375-amino-acid chain: Phosphoribulokinase, chloroplastic (375 aa).

The transit peptide at 1-31 (MAFTMRAPAPRATAQSRVTANRARRSLVVRA) directs the protein to the chloroplast. Cysteine 47 and cysteine 86 are joined by a disulfide.

Belongs to the phosphoribulokinase family. As to quaternary structure, component of a complex that contains two dimers of PRK, two tetramers of GAPDH and CP12.

It is found in the plastid. The protein resides in the chloroplast. It carries out the reaction D-ribulose 5-phosphate + ATP = D-ribulose 1,5-bisphosphate + ADP + H(+). The protein operates within carbohydrate biosynthesis; Calvin cycle. Its activity is regulated as follows. Light regulated via thioredoxin by reversible oxidation/reduction of sulfhydryl/disulfide groups. The polypeptide is Phosphoribulokinase, chloroplastic (PRKA) (Chlamydomonas reinhardtii (Chlamydomonas smithii)).